The sequence spans 418 residues: Nuclear hormone receptor 114 (418 aa).

A DNA-binding region (nuclear receptor) is located at residues 12–87; that stretch reads DHVCLVCQDF…VGMDRNALQQ (76 aa). NR C4-type zinc fingers lie at residues 15–35 and 51–70; these read CLVC…CVGC and CQFE…CRYC. The interval 89-130 is disordered; it reads RDPIGYTKRTRRPKKELKTTSDCSSDEGASTPPSVSPLQLSP. The 240-residue stretch at 170 to 409 folds into the NR LBD domain; the sequence is PIRSLHEALC…AFARQLFFGD (240 aa). The segment at 398 to 409 is AF-2; the sequence is FSAFARQLFFGD.

The protein belongs to the nuclear hormone receptor family. In terms of tissue distribution, expressed in germ and intestinal cells and at low levels in the hypodermis.

Its subcellular location is the nucleus. Probable transcription factor which may have a role in detoxifying dietary metabolites arising from bacterial tryptophan metabolism. Required for fertility and involved in proper postembryonic germline development, especially germline stem cell (GSC) proliferation. Required for activation of the methionine/S-adenosylmethionine (Met/SAM) cycle in response to low levels of SAM. This is Nuclear hormone receptor 114 from Caenorhabditis elegans.